Reading from the N-terminus, the 55-residue chain is Mitochondrial import receptor subunit TOM7 homolog (55 aa).

Residues 1 to 20 are Cytoplasmic-facing; sequence MVKLSKEAKQRLQQLFKGSQ. Residues 21–36 form a helical membrane-spanning segment; the sequence is FAIRWGFIPLVIYLGF. At 37-55 the chain is on the mitochondrial intermembrane side; that stretch reads KRGADPGMPEPTVLSLLWG.

The protein belongs to the Tom7 family. Forms part of the preprotein translocase complex of the outer mitochondrial membrane (TOM complex) which consists of at least 7 different proteins (TOMM5, TOMM6, TOMM7, TOMM20, TOMM22, TOMM40 and TOMM70).

It is found in the mitochondrion outer membrane. Its function is as follows. Required for assembly and stability of the TOM complex. Positive regulator of PRKN translocation to damaged mitochondria. Acts probably by stabilizing PINK1 on the outer membrane of depolarized mitochondria. The protein is Mitochondrial import receptor subunit TOM7 homolog (TOMM7) of Homo sapiens (Human).